A 1392-amino-acid polypeptide reads, in one-letter code: Protein dispatched homolog 3 (1392 aa).

The Cytoplasmic portion of the chain corresponds to 1 to 73; that stretch reads MDTEDDPLLQ…LGWAFTNPCC (73 aa). The disordered stretch occupies residues 16-40; that stretch reads EEQEEEEATGETFLGAQKPGPQPGA. Residues 74–94 traverse the membrane as a helical segment; the sequence is AGLVLFLGCSIPMALSAFMFL. The Lumenal segment spans residues 95-462; the sequence is YYPPLDIDIS…YEVRRTFNND (368 aa). The tract at residues 162 to 248 is disordered; it reads GNRSRQASRA…HAAVAANQSR (87 aa). Residue Asn-163 is glycosylated (N-linked (GlcNAc...) asparagine). The segment covering 190 to 199 has biased composition (polar residues); the sequence is SAAQKPTANR. Positions 457–615 constitute an SSD domain; sequence RTFNNDMLLA…LVTMPAALGL (159 aa). A helical transmembrane segment spans residues 463–483; sequence MLLAFISSSCIAALVYILTSC. Ser-484 is a topological domain (cytoplasmic). A helical membrane pass occupies residues 485–505; the sequence is VFLSFFGIASIGLSCLVALFL. The Lumenal portion of the chain corresponds to 506–508; it reads YHV. Residues 509–529 form a helical membrane-spanning segment; the sequence is VFGIQYLGILNGVAAFVIVGI. At 530-573 the chain is on the cytoplasmic side; the sequence is GVDDVFVFINTYRQATHLEDPQLRMIHTVQTAGKATFFTSLTTA. Residues 574–594 traverse the membrane as a helical segment; the sequence is AAYAANVFSQIPAVHDFGLFM. Residue Ser-595 is a topological domain, lumenal. Residues 596-616 traverse the membrane as a helical segment; sequence LIVSCCWLAVLVTMPAALGLW. Residues 617-729 lie on the Cytoplasmic side of the membrane; it reads SLYLAPLESS…WVLWSAVKSR (113 aa). A helical membrane pass occupies residues 730–750; it reads WVIVGLFVSILILSLVFASRL. The Lumenal portion of the chain corresponds to 751–1182; that stretch reads RPASRAPLLF…IFMEIVGVQS (432 aa). The N-linked (GlcNAc...) asparagine glycan is linked to Asn-1021. The chain crosses the membrane as a helical span at residues 1183–1203; it reads ALCGLVLSLLICVAAVAVFTT. His-1204 is a topological domain (cytoplasmic). Residues 1205–1225 form a helical membrane-spanning segment; that stretch reads ILLLLPVLLSILGIVCLVVTI. Topologically, residues 1226–1291 are lumenal; it reads MYWSGWEMGA…TLEAVRHVGV (66 aa). The chain crosses the membrane as a helical span at residues 1292–1312; the sequence is AIVSSALTTVIATVPLFFCII. At 1313-1320 the chain is on the cytoplasmic side; it reads APFAKFGK. Residues 1321–1341 traverse the membrane as a helical segment; the sequence is IVALNTGVSILYTLTVSTALL. At 1342 to 1358 the chain is on the lumenal side; the sequence is GIMAPSSFTRTRTSFLK. Residues 1359-1379 form a helical membrane-spanning segment; it reads ALGAVLLAGALGLGACLVLLQ. Residues 1380 to 1392 are Cytoplasmic-facing; sequence SGYKIPLPAGASL.

Belongs to the patched family. Expressed in brain and testis.

The protein localises to the endoplasmic reticulum membrane. Its subcellular location is the nucleus membrane. It is found in the cytoplasmic vesicle membrane. In terms of biological role, plays a role in neuronal proliferation and differentiation. Plays a role in the accumulation of cellular cholesterol. Involved in intracellular lipid droplet formation. May contribute to cholesterol homeostasis in neuronal cells. The chain is Protein dispatched homolog 3 from Homo sapiens (Human).